Consider the following 316-residue polypeptide: Glutamyl-Q tRNA(Asp) synthetase (316 aa).

Residues 13–17 and Asp-49 contribute to the L-glutamate site; that span reads RFAPS. The 'HIGH' region signature appears at 16-26; sequence PSPSGDLHFGS. Zn(2+)-binding residues include Cys-105, Cys-107, Tyr-119, and Cys-123. Tyr-176 and Arg-194 together coordinate L-glutamate. The 'KMSKS' region motif lies at 232–236; sequence KLSKQ. Lys-235 is an ATP binding site.

The protein belongs to the class-I aminoacyl-tRNA synthetase family. GluQ subfamily. Zn(2+) is required as a cofactor.

In terms of biological role, catalyzes the tRNA-independent activation of glutamate in presence of ATP and the subsequent transfer of glutamate onto a tRNA(Asp). Glutamate is transferred on the 2-amino-5-(4,5-dihydroxy-2-cyclopenten-1-yl) moiety of the queuosine in the wobble position of the QUC anticodon. The protein is Glutamyl-Q tRNA(Asp) synthetase of Photorhabdus laumondii subsp. laumondii (strain DSM 15139 / CIP 105565 / TT01) (Photorhabdus luminescens subsp. laumondii).